Here is a 304-residue protein sequence, read N- to C-terminus: uncharacterized protein (304 aa).

The N-terminal stretch at 1–15 (MTRPRPPLGPAMAGA) is a signal peptide. Positions 28-151 (NAAASTDADR…LSRWVDSLLS (124 aa)) constitute a Thioredoxin domain.

This is an uncharacterized protein from Mycobacterium bovis (strain ATCC BAA-935 / AF2122/97).